The sequence spans 488 residues: Glutamate--tRNA ligase (488 aa).

A 'HIGH' region motif is present at residues 11–21; sequence PSPTGQIHIGN. Cysteine 108, cysteine 110, cysteine 135, and aspartate 137 together coordinate Zn(2+). Positions 252–256 match the 'KMSKS' region motif; that stretch reads KLSKR. ATP is bound at residue lysine 255.

Belongs to the class-I aminoacyl-tRNA synthetase family. Glutamate--tRNA ligase type 1 subfamily. Monomer. It depends on Zn(2+) as a cofactor.

It is found in the cytoplasm. The enzyme catalyses tRNA(Glu) + L-glutamate + ATP = L-glutamyl-tRNA(Glu) + AMP + diphosphate. Catalyzes the attachment of glutamate to tRNA(Glu) in a two-step reaction: glutamate is first activated by ATP to form Glu-AMP and then transferred to the acceptor end of tRNA(Glu). This is Glutamate--tRNA ligase from Natranaerobius thermophilus (strain ATCC BAA-1301 / DSM 18059 / JW/NM-WN-LF).